The chain runs to 681 residues: UvrABC system protein C (681 aa).

The segment at 1-23 (MNGKKLPDGGILFDETDDEDDDA) is disordered. Residues 14 to 23 (DETDDEDDDA) are compositionally biased toward acidic residues. The 79-residue stretch at 67–145 (NSPGVYRMFN…IKRLRPRFNV (79 aa)) folds into the GIY-YIG domain. Positions 255–290 (QAVKTAIARQMNEASEDLDFERAAIYRDRLAALSHV) constitute a UVR domain.

The protein belongs to the UvrC family. In terms of assembly, interacts with UvrB in an incision complex.

Its subcellular location is the cytoplasm. In terms of biological role, the UvrABC repair system catalyzes the recognition and processing of DNA lesions. UvrC both incises the 5' and 3' sides of the lesion. The N-terminal half is responsible for the 3' incision and the C-terminal half is responsible for the 5' incision. In Agrobacterium fabrum (strain C58 / ATCC 33970) (Agrobacterium tumefaciens (strain C58)), this protein is UvrABC system protein C.